We begin with the raw amino-acid sequence, 530 residues long: GH3 domain-containing protein (530 aa).

A signal peptide spans 1 to 17 (MLLWPLLLLLLLLPTLA). Residues 99–122 (LTKASQTQQEDSGEQPLPPTSNQD) are disordered. N450 is a glycosylation site (N-linked (GlcNAc...) asparagine). Q489 is modified (N5-methylglutamine).

Belongs to the GH3 family. In terms of processing, methylated at Gln-489 by N6AMT1.

Its subcellular location is the endoplasmic reticulum. The protein resides in the nucleus envelope. The chain is GH3 domain-containing protein (GHDC) from Homo sapiens (Human).